Here is a 126-residue protein sequence, read N- to C-terminus: Small ribosomal subunit protein uS13 (126 aa).

A disordered region spans residues 92–126 (HRRGLPVRGQRTKTNARTRKGPKRTVAGKKKAGRK).

This sequence belongs to the universal ribosomal protein uS13 family. Part of the 30S ribosomal subunit. Forms a loose heterodimer with protein S19. Forms two bridges to the 50S subunit in the 70S ribosome.

Located at the top of the head of the 30S subunit, it contacts several helices of the 16S rRNA. In the 70S ribosome it contacts the 23S rRNA (bridge B1a) and protein L5 of the 50S subunit (bridge B1b), connecting the 2 subunits; these bridges are implicated in subunit movement. Contacts the tRNAs in the A and P-sites. This is Small ribosomal subunit protein uS13 from Kineococcus radiotolerans (strain ATCC BAA-149 / DSM 14245 / SRS30216).